Here is a 216-residue protein sequence, read N- to C-terminus: Ras-related protein Rab-5C (216 aa).

GTP contacts are provided by serine 30, alanine 31, glycine 33, lysine 34, serine 35, serine 36, histidine 47, glutamate 48, threonine 53, and glycine 79. Serine 35 contacts Mg(2+). Short sequence motifs (switch) lie at residues glutamine 45 to alanine 57 and alanine 78 to alanine 94. Position 53 (threonine 53) interacts with Mg(2+). A Phosphoserine modification is found at serine 85. The GTP site is built by asparagine 134, lysine 135, aspartate 137, alanine 165, and lysine 166. The interval asparagine 185–asparagine 216 is disordered. Polar residues predominate over residues glutamine 203 to asparagine 216. 2 S-geranylgeranyl cysteine lipidation sites follow: cysteine 213 and cysteine 214.

The protein belongs to the small GTPase superfamily. Rab family. In terms of assembly, interacts with EEA1 and INCA1. Interacts with GDI1, GDI2, CHML and CHM; phosphorylation at Ser-85 disrupts this interaction. It depends on Mg(2+) as a cofactor. In terms of processing, phosphorylation of Ser-85 in the switch II region by LRRK2 prevents the association of RAB regulatory proteins, including CHM, CHML and RAB GDP dissociation inhibitors GDI1 and GDI2.

Its subcellular location is the cell membrane. It is found in the early endosome membrane. It localises to the melanosome. The catalysed reaction is GTP + H2O = GDP + phosphate + H(+). Regulated by guanine nucleotide exchange factors (GEFs) which promote the exchange of bound GDP for free GTP. Regulated by GTPase activating proteins (GAPs) which increase the GTP hydrolysis activity. Inhibited by GDP dissociation inhibitors (GDIs). In terms of biological role, the small GTPases Rab are key regulators of intracellular membrane trafficking, from the formation of transport vesicles to their fusion with membranes. Rabs cycle between an inactive GDP-bound form and an active GTP-bound form that is able to recruit to membranes different sets of downstream effectors directly responsible for vesicle formation, movement, tethering and fusion. This is Ras-related protein Rab-5C (RAB5C) from Bos taurus (Bovine).